The following is a 206-amino-acid chain: Somatotropin (206 aa).

The N-terminal stretch at Met-1–Ser-18 is a signal peptide. Gln-19 is subject to Pyrrolidone carboxylic acid. Position 37 (His-37) interacts with Zn(2+). A disulfide bond links Cys-70 and Cys-179. Glu-188 provides a ligand contact to Zn(2+). Cys-196 and Cys-204 form a disulfide bridge.

This sequence belongs to the somatotropin/prolactin family.

It is found in the secreted. Functionally, growth hormone plays an important role in growth control and is involved in the regulation of several anabolic processes. Implicated as an osmoregulatory substance important for seawater adaptation. The chain is Somatotropin (gh) from Pseudocaranx dentex (White trevally).